Consider the following 988-residue polypeptide: DExH-box ATP-dependent RNA helicase DExH9 (988 aa).

Positions 1–27 are disordered; it reads MGSVKRKSVEESSDSAPPQKVQREDDS. Residues 76–232 form the Helicase ATP-binding domain; it reads IKCLDNGESV…WVAKVHQQPC (157 aa). 89 to 96 contributes to the ATP binding site; that stretch reads AHTSAGKT. The short motif at 180-183 is the DEVH box element; the sequence is DEVH. The Helicase C-terminal domain occupies 307–509; that stretch reads DIFKLVKMII…SYNMLLNQLR (203 aa).

This sequence belongs to the DExH box helicase family. SKI2 subfamily. Ubiquitous but preferentially expressed in active tissues.

It localises to the nucleus. Its subcellular location is the nucleolus. It carries out the reaction ATP + H2O = ADP + phosphate + H(+). Its function is as follows. ATP-dependent RNA helicase that associates with the RNA exosome complex. Required for proper rRNA biogenesis and development. Involved in the 3'-processing of the 7S pre-RNA to the mature 5.8S rRNA and also in the removal of rRNA maturation by-products. This chain is DExH-box ATP-dependent RNA helicase DExH9, found in Arabidopsis thaliana (Mouse-ear cress).